We begin with the raw amino-acid sequence, 130 residues long: Small ribosomal subunit protein uS9 (130 aa).

Residues R109 to R130 form a disordered region. The segment covering K111–R130 has biased composition (basic residues).

The protein belongs to the universal ribosomal protein uS9 family.

The chain is Small ribosomal subunit protein uS9 from Alkaliphilus metalliredigens (strain QYMF).